The following is a 481-amino-acid chain: Zygotic gap protein knirps (481 aa).

The segment at residues 2-78 (NQTCKVCGEP…VGMSKGGSRY (77 aa)) is a DNA-binding region (nuclear receptor). 2 NR C4-type zinc fingers span residues 5 to 25 (CKVC…CEGC) and 42 to 66 (CKND…LRKC). Low complexity-rich tracts occupy residues 100–111 (AAAGKAPGHATG), 127–148 (QQQQ…QQQQ), 245–264 (TPPT…AASP), 316–335 (SHSS…SPLS), and 420–440 (TTNS…TSST). Disordered stretches follow at residues 100-161 (AAAG…GYTG), 231-294 (SVDS…PHTI), 308-336 (LLPG…PLSF), and 420-442 (TTNS…STEA).

The protein belongs to the nuclear hormone receptor family. NR0 subfamily.

Its subcellular location is the nucleus. Transcriptional repressor. Binds to multiple sites in the eve stripe 3 enhancer element. Plays an essential role in the segmentation process both by refining the expression patterns of gap genes and by establishing pair-rules stripes of gene expression. This Drosophila virilis (Fruit fly) protein is Zygotic gap protein knirps (kni).